The following is a 90-amino-acid chain: WAP four-disulfide core domain protein 12 (90 aa).

A signal peptide spans 1–23; sequence MGSSSFLVLMVSLALVTLVAVEG. A WAP domain is found at 27–74; the sequence is GIEKAGVCPADNVRCFKSDPPQCHTDQDCLGERKCCYLHCGFKCVIPV. Intrachain disulfides connect C34-C62, C41-C66, C49-C61, and C55-C70.

The protein resides in the secreted. Its function is as follows. Antibacterial protein. Putative acid-stable proteinase inhibitor. The sequence is that of WAP four-disulfide core domain protein 12 (WFDC12) from Gorilla gorilla gorilla (Western lowland gorilla).